The primary structure comprises 102 residues: uncharacterized protein (102 aa).

Residues 79–102 form a disordered region; sequence AELLHPSPAPMPPATHGRSAAPCS.

This is an uncharacterized protein from Homo sapiens (Human).